We begin with the raw amino-acid sequence, 451 residues long: Enolase (451 aa).

Gln163 is a binding site for (2R)-2-phosphoglycerate. Glu205 (proton donor) is an active-site residue. 3 residues coordinate Mg(2+): Asp258, Glu308, and Asp335. 4 residues coordinate (2R)-2-phosphoglycerate: Lys360, Arg389, Ser390, and Lys411. Lys360 (proton acceptor) is an active-site residue.

Belongs to the enolase family. Mg(2+) is required as a cofactor.

The protein localises to the cytoplasm. Its subcellular location is the secreted. The protein resides in the cell surface. It catalyses the reaction (2R)-2-phosphoglycerate = phosphoenolpyruvate + H2O. The protein operates within carbohydrate degradation; glycolysis; pyruvate from D-glyceraldehyde 3-phosphate: step 4/5. Its function is as follows. Catalyzes the reversible conversion of 2-phosphoglycerate (2-PG) into phosphoenolpyruvate (PEP). It is essential for the degradation of carbohydrates via glycolysis. The protein is Enolase of Mycoplasma capricolum subsp. capricolum (strain California kid / ATCC 27343 / NCTC 10154).